Reading from the N-terminus, the 213-residue chain is Histone H1.2 (213 aa).

A compositionally biased stretch (low complexity) spans 1-17 (MSETAPAAPAAAPPAEK). Residues 1–41 (MSETAPAAPAAAPPAEKAPVKKKAAKKAGGTPRKASGPPVS) are disordered. An N-acetylserine; partial modification is found at serine 2. The residue at position 2 (serine 2) is a Phosphoserine. Residue lysine 17 is modified to N6-acetyllysine. 3 positions are modified to N6-(2-hydroxyisobutyryl)lysine: lysine 23, lysine 26, and lysine 27. The residue at position 34 (lysine 34) is an N6-(beta-hydroxybutyryl)lysine; alternate. At lysine 34 the chain carries N6-crotonyllysine; alternate. Position 34 is an N6-methyllysine; alternate (lysine 34). The region spanning 36 to 109 (SGPPVSELIT…GASGSFKLNK (74 aa)) is the H15 domain. Position 46 is an N6-(2-hydroxyisobutyryl)lysine (lysine 46). Position 52 is an N6-(beta-hydroxybutyryl)lysine; alternate (lysine 52). N6-(2-hydroxyisobutyryl)lysine; alternate is present on lysine 52. A Citrulline modification is found at arginine 54. N6-(2-hydroxyisobutyryl)lysine is present on lysine 63. At lysine 64 the chain carries N6-(beta-hydroxybutyryl)lysine; alternate. Lysine 64 carries the N6-crotonyllysine; alternate modification. The residue at position 64 (lysine 64) is an N6-(2-hydroxyisobutyryl)lysine; alternate. N6-(2-hydroxyisobutyryl)lysine occurs at positions 75 and 81. N6-(beta-hydroxybutyryl)lysine; alternate occurs at positions 85 and 90. 3 positions are modified to N6-crotonyllysine; alternate: lysine 85, lysine 90, and lysine 97. N6-(2-hydroxyisobutyryl)lysine; alternate occurs at positions 85, 90, and 97. The segment at 92 to 213 (TLVQTKGTGA…KPKKAAPKKK (122 aa)) is disordered. The residue at position 97 (lysine 97) is an N6-succinyllysine; alternate. At serine 104 the chain carries Phosphoserine; by PKC. At lysine 106 the chain carries N6-(beta-hydroxybutyryl)lysine. Residues lysine 110, lysine 117, lysine 121, lysine 129, and lysine 136 each carry the N6-(2-hydroxyisobutyryl)lysine modification. Basic residues predominate over residues 119–140 (KVKKAGGTKPKKPVGAAKKPKK). Threonine 146 is modified (phosphothreonine). Lysine 148 carries the N6-(2-hydroxyisobutyryl)lysine modification. The span at 149–160 (KSAKKTPKKAKK) shows a compositional bias: basic residues. N6-crotonyllysine; alternate occurs at positions 159 and 168. Residues lysine 159 and lysine 168 each carry the N6-(2-hydroxyisobutyryl)lysine; alternate modification. Residues 169 to 186 (KVAKSPKKAKVAKPKKAA) show a composition bias toward basic residues. An N6-methyllysine; by EHMT1 and EHMT2 modification is found at lysine 187. ADP-ribosylserine is present on serine 188. Residues 193–213 (VKPKAAKPKVVKPKKAAPKKK) are compositionally biased toward basic residues. Lysine 213 is modified (N6-(2-hydroxyisobutyryl)lysine).

Belongs to the histone H1/H5 family. In terms of assembly, interacts with TSC22D1 isoforms 2 and 5. Post-translationally, H1 histones are progressively phosphorylated during the cell cycle, becoming maximally phosphorylated during late G2 phase and M phase, and being dephosphorylated sharply thereafter. Crotonylation (Kcr) is specifically present in male germ cells and marks testis-specific genes in post-meiotic cells, including X-linked genes that escape sex chromosome inactivation in haploid cells. Crotonylation marks active promoters and enhancers and confers resistance to transcriptional repressors. It is also associated with post-meiotically activated genes on autosomes. In terms of processing, citrullination at Arg-54 (H1R54ci) by PADI4 takes place within the DNA-binding site of H1 and results in its displacement from chromatin and global chromatin decondensation, thereby promoting pluripotency and stem cell maintenance. Post-translationally, ADP-ribosylated on Ser-188 in response to DNA damage.

It is found in the nucleus. The protein localises to the chromosome. Its function is as follows. Histone H1 protein binds to linker DNA between nucleosomes forming the macromolecular structure known as the chromatin fiber. Histones H1 are necessary for the condensation of nucleosome chains into higher-order structured fibers. Also acts as a regulator of individual gene transcription through chromatin remodeling, nucleosome spacing and DNA methylation. This Homo sapiens (Human) protein is Histone H1.2.